The following is a 114-amino-acid chain: Large ribosomal subunit protein bL19 (114 aa).

This sequence belongs to the bacterial ribosomal protein bL19 family.

This protein is located at the 30S-50S ribosomal subunit interface and may play a role in the structure and function of the aminoacyl-tRNA binding site. This Lactococcus lactis subsp. lactis (strain IL1403) (Streptococcus lactis) protein is Large ribosomal subunit protein bL19.